The chain runs to 520 residues: Translation initiation factor IF3-1, mitochondrial (520 aa).

Residues 1–66 (MAIWRIINRS…SNIFQNLRFL (66 aa)) constitute a mitochondrion transit peptide. Residues 271–282 (ARVKEESPKPDS) show a composition bias toward basic and acidic residues. The disordered stretch occupies residues 271-520 (ARVKEESPKP…YGIFSTPKTK (250 aa)). Positions 336–361 (EPQSPNQHVNPQRPRFSNQAPNQQPT) are enriched in polar residues. Residues 369–379 (PNQPPSAPRPQ) show a composition bias toward pro residues. Polar residues-rich tracts occupy residues 404 to 422 (NQAP…FPNQ) and 458 to 468 (FQNQAPNQQPT). The segment covering 473-485 (PQPPNPPRAPPRP) has biased composition (pro residues).

It belongs to the IF-3 family. Monomer.

Its subcellular location is the mitochondrion. Functionally, IF-3 binds to the 30S ribosomal subunit and shifts the equilibrium between 70S ribosomes and their 50S and 30S subunits in favor of the free subunits, thus enhancing the availability of 30S subunits on which protein synthesis initiation begins. This chain is Translation initiation factor IF3-1, mitochondrial, found in Arabidopsis thaliana (Mouse-ear cress).